A 486-amino-acid polypeptide reads, in one-letter code: MQDKVLTDLIKTEKPEQIEDFLPNEEDITSPTITRNLYVESYGCQMNIADSEVVVSILRPHGFEITDTYEKADVIFINTCAIRDKAEQTVRKRLSQFNQLKRRNPDLVIGVLGCMAERLKQTLLEEEKLVDLVAGPDAYRDLPRLLATVDSGHKAINTFLSREETYADISPIRLNSNGVSAFISIMRGCDNMCSFCVVPFTRGRERSRDPYSIVKEATELFEQGYREVTLLGQNVDSYKWSPNTDKKEQPTTPQEGVVNFAQLLAMVAQIHPDLRIRFSTSHPKDITDQVLYTIKAYDNICKYIHLPVQSGSSRVLKLMNRTYDRAWYLQKIEDIRRIVGEDCGISSDMIAGFCTETEEDHQDTLSLMEHIKYEFSYMFYYSERPGTLAARKYADDVPLAVKKRRLQEIIDKQRQHSFEKNLKDIGKVYQVLVEGPSKKSDIEWQGRNSANKVVVFPNVDCKKGTYVDVLITNCTTGTLLGEICTR.

One can recognise an MTTase N-terminal domain in the interval arginine 35–serine 151. Positions 44, 80, 114, 189, 193, and 196 each coordinate [4Fe-4S] cluster. In terms of domain architecture, Radical SAM core spans asparagine 175–glutamate 419. The TRAM domain maps to leucine 422–threonine 485.

The protein belongs to the methylthiotransferase family. MiaB subfamily. As to quaternary structure, monomer. [4Fe-4S] cluster is required as a cofactor.

Its subcellular location is the cytoplasm. It catalyses the reaction N(6)-dimethylallyladenosine(37) in tRNA + (sulfur carrier)-SH + AH2 + 2 S-adenosyl-L-methionine = 2-methylsulfanyl-N(6)-dimethylallyladenosine(37) in tRNA + (sulfur carrier)-H + 5'-deoxyadenosine + L-methionine + A + S-adenosyl-L-homocysteine + 2 H(+). Functionally, catalyzes the methylthiolation of N6-(dimethylallyl)adenosine (i(6)A), leading to the formation of 2-methylthio-N6-(dimethylallyl)adenosine (ms(2)i(6)A) at position 37 in tRNAs that read codons beginning with uridine. In Amoebophilus asiaticus (strain 5a2), this protein is tRNA-2-methylthio-N(6)-dimethylallyladenosine synthase.